A 206-amino-acid chain; its full sequence is FMN-dependent NADH:quinone oxidoreductase 2 (206 aa).

FMN-binding positions include serine 10, 16–18 (SYS), and 140–143 (SCGG).

This sequence belongs to the azoreductase type 1 family. In terms of assembly, homodimer. The cofactor is FMN.

It catalyses the reaction 2 a quinone + NADH + H(+) = 2 a 1,4-benzosemiquinone + NAD(+). The catalysed reaction is N,N-dimethyl-1,4-phenylenediamine + anthranilate + 2 NAD(+) = 2-(4-dimethylaminophenyl)diazenylbenzoate + 2 NADH + 2 H(+). Its function is as follows. Quinone reductase that provides resistance to thiol-specific stress caused by electrophilic quinones. Functionally, also exhibits azoreductase activity. Catalyzes the reductive cleavage of the azo bond in aromatic azo compounds to the corresponding amines. This chain is FMN-dependent NADH:quinone oxidoreductase 2, found in Cupriavidus pinatubonensis (strain JMP 134 / LMG 1197) (Cupriavidus necator (strain JMP 134)).